A 293-amino-acid chain; its full sequence is Movement protein BC1 (293 aa).

Belongs to the begomovirus movement protein BC1 family. As to quaternary structure, binds to dimeric supercoiled plasmid DNA. Post-translationally, phosphorylated.

Its subcellular location is the host cell membrane. The protein resides in the host microsome membrane. The protein localises to the host endoplasmic reticulum membrane. Functionally, transports viral genome to neighboring plant cells directly through plasmosdesmata, without any budding. The movement protein allows efficient cell to cell propagation, by bypassing the host cell wall barrier. Begomovirus genome is shuttled out of nucleus by Nuclear shuttle protein (NSP) and the movement protein transports the DNA-NSP complex to cell plasmodesmata and facilitates further movement across the cell wall. This is Movement protein BC1 from Macroptilium lathyroides (Lima bean).